We begin with the raw amino-acid sequence, 86 residues long: Beta-toxin Tz1 (86 aa).

Positions 1-20 (MTRFVLFICCFFLIGMVVEC) are cleaved as a signal peptide. The LCN-type CS-alpha/beta domain maps to 21–83 (KDGYLVGNDG…TWDRATNRCG (63 aa)). Disulfide bonds link Cys-31–Cys-82, Cys-35–Cys-57, Cys-43–Cys-63, and Cys-47–Cys-65. Arg-84 is modified (arginine amide).

The protein belongs to the long (4 C-C) scorpion toxin superfamily. Sodium channel inhibitor family. Beta subfamily. Expressed by the venom gland.

The protein localises to the secreted. Beta toxins bind voltage-independently at site-4 of sodium channels (Nav) and shift the voltage of activation toward more negative potentials thereby affecting sodium channel activation and promoting spontaneous and repetitive firing. Strongly affects skeletal muscle channels Nav1.4/SCN4A, poorly affects the neuronal channels Nav1.6/SCN8A and Nav1.2/SCN2A. Induces spastic paralysis of rear limbs, increased salivation, apnea, tachycardia and increased perspiration. The sequence is that of Beta-toxin Tz1 from Tityus zulianus (Venezuelan scorpion).